The primary structure comprises 426 residues: Glutamate-1-semialdehyde 2,1-aminomutase (426 aa).

Lys265 carries the post-translational modification N6-(pyridoxal phosphate)lysine.

Belongs to the class-III pyridoxal-phosphate-dependent aminotransferase family. HemL subfamily. In terms of assembly, homodimer. The cofactor is pyridoxal 5'-phosphate.

The protein resides in the cytoplasm. The catalysed reaction is (S)-4-amino-5-oxopentanoate = 5-aminolevulinate. The protein operates within porphyrin-containing compound metabolism; protoporphyrin-IX biosynthesis; 5-aminolevulinate from L-glutamyl-tRNA(Glu): step 2/2. This Neisseria gonorrhoeae (strain NCCP11945) protein is Glutamate-1-semialdehyde 2,1-aminomutase.